Here is a 431-residue protein sequence, read N- to C-terminus: Peroxisomal biogenesis factor 3 (431 aa).

Residues 1–10 (MDFFRRHQKK) lie on the Peroxisomal side of the membrane. Residues 11–28 (VLALVGVALSSYLFIDYV) traverse the membrane as a helical segment. The Cytoplasmic portion of the chain corresponds to 29–431 (KKKFFEIQGR…VVYSSFDWAL (403 aa)). The interval 95–126 (TDRVLALESSTSSSATAQTVPTMTSGATEEGE) is disordered. The segment covering 112-121 (QTVPTMTSGA) has biased composition (polar residues).

It belongs to the peroxin-3 family.

The protein localises to the peroxisome membrane. Involved in peroxisome biosynthesis. Seems to directly or indirectly sequesters components of the peroxisome biogenesis machinery. The protein is Peroxisomal biogenesis factor 3 (PEX3) of Yarrowia lipolytica (strain CLIB 122 / E 150) (Yeast).